A 240-amino-acid polypeptide reads, in one-letter code: Ribonuclease 3 (240 aa).

Residues 10-136 form the RNase III domain; sequence VREFQETVGV…LIGAVYLDRG (127 aa). Glutamate 49 contributes to the Mg(2+) binding site. Aspartate 53 is an active-site residue. The Mg(2+) site is built by aspartate 122 and glutamate 125. Glutamate 125 is a catalytic residue. Positions 163–231 constitute a DRBM domain; sequence DWKTSLQELT…AESAWKAIRA (69 aa). The disordered stretch occupies residues 205–240; sequence TYGSGEGRSKKEAEQQAAESAWKAIRAATEKAKQES. Positions 219 to 228 are enriched in low complexity; it reads QQAAESAWKA.

This sequence belongs to the ribonuclease III family. As to quaternary structure, homodimer. Requires Mg(2+) as cofactor.

The protein localises to the cytoplasm. It carries out the reaction Endonucleolytic cleavage to 5'-phosphomonoester.. In terms of biological role, digests double-stranded RNA. Involved in the processing of primary rRNA transcript to yield the immediate precursors to the large and small rRNAs (23S and 16S). Processes some mRNAs, and tRNAs when they are encoded in the rRNA operon. Processes pre-crRNA and tracrRNA of type II CRISPR loci if present in the organism. The sequence is that of Ribonuclease 3 from Thermobifida fusca (strain YX).